The sequence spans 134 residues: Ribosome-binding factor A (134 aa).

It belongs to the RbfA family. As to quaternary structure, monomer. Binds 30S ribosomal subunits, but not 50S ribosomal subunits or 70S ribosomes.

It localises to the cytoplasm. One of several proteins that assist in the late maturation steps of the functional core of the 30S ribosomal subunit. Associates with free 30S ribosomal subunits (but not with 30S subunits that are part of 70S ribosomes or polysomes). Required for efficient processing of 16S rRNA. May interact with the 5'-terminal helix region of 16S rRNA. This chain is Ribosome-binding factor A, found in Rhizobium johnstonii (strain DSM 114642 / LMG 32736 / 3841) (Rhizobium leguminosarum bv. viciae).